The chain runs to 103 residues: Small ribosomal subunit protein uS10 (103 aa).

It belongs to the universal ribosomal protein uS10 family. Part of the 30S ribosomal subunit.

Involved in the binding of tRNA to the ribosomes. The chain is Small ribosomal subunit protein uS10 from Dechloromonas aromatica (strain RCB).